Here is a 97-residue protein sequence, read N- to C-terminus: Protein RADIALIS-like 6 (97 aa).

The 53-residue stretch at 7-59 (SSISPWTFSQNKMFERALAVYDKDTPDRWHNVAKAVGGKTVEEVKRHYDILVE) folds into the SANT domain.

Expressed in the micropylar endosperm surrounding globular-stage embryos but no expression was detected elsewhere, including floral tissues.

The protein resides in the nucleus. Functionally, probable transcription factor. The protein is Protein RADIALIS-like 6 (RL6) of Arabidopsis thaliana (Mouse-ear cress).